The primary structure comprises 606 residues: (R)-limonene synthase 1, chloroplastic (606 aa).

The transit peptide at 1 to 32 directs the protein to the chloroplast; that stretch reads MSSCINPSTLVTSVNAFKCLPLATNKAAIRIM. 2 residues coordinate Mn(2+): Asp342 and Asp346. The substrate site is built by Asp342, Asp346, Arg484, Asp487, and Lys503. A DDXXD motif motif is present at residues 342–346; the sequence is DDIYD. Mn(2+) is bound at residue Asp487.

The protein belongs to the terpene synthase family. Requires Mg(2+) as cofactor. Mn(2+) serves as cofactor.

It localises to the plastid. The protein localises to the chloroplast. The catalysed reaction is (2E)-geranyl diphosphate = (4R)-limonene + diphosphate. In Citrus limon (Lemon), this protein is (R)-limonene synthase 1, chloroplastic.